We begin with the raw amino-acid sequence, 3432 residues long: Hybrid signal transduction histidine kinase G (3432 aa).

Low complexity-rich tracts occupy residues 44 to 68, 76 to 90, and 126 to 145; these read HFSN…TTTN, SQLQ…QQNN, and QPQQ…SQKQ. Disordered stretches follow at residues 44-109 and 124-240; these read HFSN…TNSS and DDQP…HNIN. The span at 146-157 shows a compositional bias: polar residues; the sequence is TSQLNISGNNSG. Low complexity-rich tracts occupy residues 165 to 177 and 187 to 238; these read TISN…NFIH and KTPI…NNHN. The Protein kinase domain maps to 263 to 792; it reads LSFKHGYNSG…YGLKKDLEMF (530 aa). ATP contacts are provided by residues 269–277 and K305; that span reads YNSGLGGNF. Residues 399–419 are compositionally biased toward low complexity; the sequence is NNNNNNNNSYNNNYNNNNNNN. Disordered stretches follow at residues 399–426 and 443–542; these read NNNN…TSPI and FQLN…STPL. Residues 443 to 467 show a composition bias toward polar residues; it reads FQLNSSTNSTGSPLIITSQPMPFQL. Over residues 468-479 the composition is skewed to low complexity; that stretch reads NSNSNTTASSSS. Polar residues predominate over residues 480–490; sequence PITHSNLNTAI. Residues 491 to 508 show a composition bias toward low complexity; it reads TSTTTSNSNSNNNSNNNN. Positions 509–525 are enriched in gly residues; the sequence is SGGGGGGGGGGGGGGGT. Catalysis depends on D585, which acts as the Proton acceptor; for protein kinase activity. The tract at residues 863-1121 is AAA; sequence GKEFIIVSGL…TMKIVLKNLD (259 aa). 871 to 878 serves as a coordination point for ATP; sequence GLSGVGKT. Disordered regions lie at residues 1040-1077 and 1261-1290; these read NNFS…NNNI and TTTT…NNSD. Low complexity predominate over residues 1261–1288; it reads TTTTNNNTTNNTNNNNTNNNNNNTNGNN. The next 2 membrane-spanning stretches (helical) occupy residues 1567–1587 and 1599–1619; these read VMVI…TLLL and ISSW…IGHF. One copy of the TPR repeat lies at 1965 to 1998; it reads SQLMLAKAEFERINGNFEQAMEYFSEAISLAQQF. 2 disordered regions span residues 2071–2095 and 2299–2349; these read EYSN…QASI and GYNN…NNNK. The span at 2073 to 2095 shows a compositional bias: low complexity; that stretch reads SNNNNNNNSNNNNNNANQSQASI. The region spanning 2215 to 2465 is the GAF domain; it reads YFDRLLKRLM…SNARLFIKVN (251 aa). The Histidine kinase domain occupies 2491 to 2769; that stretch reads NMSHEMRTPL…TFHFCVELGK (279 aa). H2494 carries the phosphohistidine; by autocatalysis modification. Low complexity predominate over residues 2637–2648; sequence TTTNNKKQLNTD. 5 disordered regions span residues 2637 to 2673, 2785 to 2815, 2917 to 3030, 3134 to 3160, and 3247 to 3281; these read TTTN…SIDL, LLNN…NNNN, LSPK…NNNS, NNNI…HSQY, and NSIS…TITT. Over residues 2649-2673 the composition is skewed to acidic residues; the sequence is NDGDDDDDDDNENLDENNEDTSIDL. Composition is skewed to low complexity over residues 2787–2815, 2935–3029, and 3134–3145; these read NNNN…NNNN, LSSS…HNNN, and NNNINNINNNNN. One can recognise a Response regulatory domain in the interval 3305–3424; that stretch reads KILIVEDNEM…DLRYVINRYG (120 aa). A 4-aspartylphosphate modification is found at D3356.

This sequence belongs to the protein kinase superfamily. Ser/Thr protein kinase family. Post-translationally, activation probably requires transfer of a phosphate group between a histidine in the kinase core (transmitter) domain and an aspartate of the receiver domain.

Its subcellular location is the membrane. It catalyses the reaction ATP + protein L-histidine = ADP + protein N-phospho-L-histidine.. The catalysed reaction is L-seryl-[protein] + ATP = O-phospho-L-seryl-[protein] + ADP + H(+). It carries out the reaction L-threonyl-[protein] + ATP = O-phospho-L-threonyl-[protein] + ADP + H(+). Its function is as follows. Acts as a receptor histidine kinase for a signal transduction pathway. This protein undergoes an ATP-dependent autophosphorylation at a conserved histidine residue in the kinase core, and a phosphoryl group is then transferred to a conserved aspartate residue in the receiver domain. This is Hybrid signal transduction histidine kinase G (dhkG) from Dictyostelium discoideum (Social amoeba).